A 331-amino-acid chain; its full sequence is 4-hydroxythreonine-4-phosphate dehydrogenase (331 aa).

Substrate-binding residues include His137 and Thr138. Residues His167, His212, and His267 each coordinate a divalent metal cation. Substrate is bound by residues Lys275, Asn284, and Arg293.

The protein belongs to the PdxA family. As to quaternary structure, homodimer. It depends on Zn(2+) as a cofactor. Requires Mg(2+) as cofactor. Co(2+) serves as cofactor.

It localises to the cytoplasm. It catalyses the reaction 4-(phosphooxy)-L-threonine + NAD(+) = 3-amino-2-oxopropyl phosphate + CO2 + NADH. Its pathway is cofactor biosynthesis; pyridoxine 5'-phosphate biosynthesis; pyridoxine 5'-phosphate from D-erythrose 4-phosphate: step 4/5. Catalyzes the NAD(P)-dependent oxidation of 4-(phosphooxy)-L-threonine (HTP) into 2-amino-3-oxo-4-(phosphooxy)butyric acid which spontaneously decarboxylates to form 3-amino-2-oxopropyl phosphate (AHAP). The sequence is that of 4-hydroxythreonine-4-phosphate dehydrogenase from Yersinia enterocolitica serotype O:8 / biotype 1B (strain NCTC 13174 / 8081).